The chain runs to 171 residues: PIDD1 alternative open reading frame protein (171 aa).

2 disordered regions span residues 1–22 (MSGL…RAGG) and 76–156 (ILAS…LCPA). A compositionally biased stretch (low complexity) spans 84–99 (GPSAAGGHPGPAASEP).

In terms of assembly, interacts with calpain-2 catalytic subunit CAPN2. In terms of processing, cleaved in vitro following UV irradiation to induce caspase-mediated apoptosis and this cleavage is inhibited by a broad-spectrum caspase inhibitor.

It is found in the cytoplasm. The protein localises to the cytoskeleton. The polypeptide is PIDD1 alternative open reading frame protein (Homo sapiens (Human)).